Reading from the N-terminus, the 99-residue chain is Malonate decarboxylase acyl carrier protein (99 aa).

Position 25 is an O-(phosphoribosyl dephospho-coenzyme A)serine (serine 25).

It belongs to the MdcC family. Post-translationally, covalently binds the prosthetic group of malonate decarboxylase.

The protein resides in the cytoplasm. In terms of biological role, subunit of malonate decarboxylase, it is an acyl carrier protein to which acetyl and malonyl thioester residues are bound via a 2'-(5''-phosphoribosyl)-3'-dephospho-CoA prosthetic group and turn over during the catalytic mechanism. In Pseudomonas syringae pv. syringae (strain B728a), this protein is Malonate decarboxylase acyl carrier protein.